The primary structure comprises 589 residues: Aspartate--tRNA ligase (589 aa).

Residue glutamate 174 coordinates L-aspartate. Positions glutamine 198–lysine 201 are aspartate. Arginine 220 lines the L-aspartate pocket. ATP contacts are provided by residues arginine 220 to glutamate 222 and glutamine 229. Histidine 448 lines the L-aspartate pocket. Glutamate 483 lines the ATP pocket. Arginine 490 contributes to the L-aspartate binding site. Glycine 535–arginine 538 serves as a coordination point for ATP.

It belongs to the class-II aminoacyl-tRNA synthetase family. Type 1 subfamily. As to quaternary structure, homodimer.

The protein localises to the cytoplasm. It carries out the reaction tRNA(Asp) + L-aspartate + ATP = L-aspartyl-tRNA(Asp) + AMP + diphosphate. Its function is as follows. Catalyzes the attachment of L-aspartate to tRNA(Asp) in a two-step reaction: L-aspartate is first activated by ATP to form Asp-AMP and then transferred to the acceptor end of tRNA(Asp). This Xylella fastidiosa (strain 9a5c) protein is Aspartate--tRNA ligase.